A 159-amino-acid polypeptide reads, in one-letter code: Large ribosomal subunit protein uL15 (159 aa).

The tract at residues 1 to 39 (MKLNELSPADGSTKKRMRVGRGVGSGKGKTAGRGVKGQN) is disordered. Residues 21-35 (RGVGSGKGKTAGRGV) are compositionally biased toward gly residues.

Belongs to the universal ribosomal protein uL15 family. In terms of assembly, part of the 50S ribosomal subunit.

In terms of biological role, binds to the 23S rRNA. In Hyphomonas neptunium (strain ATCC 15444), this protein is Large ribosomal subunit protein uL15.